A 37-amino-acid chain; its full sequence is Hemocyanin subunit B (37 aa).

It belongs to the tyrosinase family. Hemocyanin subfamily. As to expression, hemolymph.

Its subcellular location is the secreted. It localises to the extracellular space. Hemocyanins are copper-containing oxygen carriers occurring freely dissolved in the hemolymph of many mollusks and arthropods. This Cancer pagurus (Rock crab) protein is Hemocyanin subunit B.